Reading from the N-terminus, the 178-residue chain is Inorganic pyrophosphatase (178 aa).

Positions 30, 44, and 56 each coordinate substrate. D66, D71, and D103 together coordinate Mg(2+). Position 140 (Y140) interacts with substrate.

Belongs to the PPase family. As to quaternary structure, homohexamer. It depends on Mg(2+) as a cofactor.

It is found in the cytoplasm. The enzyme catalyses diphosphate + H2O = 2 phosphate + H(+). Functionally, catalyzes the hydrolysis of inorganic pyrophosphate (PPi) forming two phosphate ions. In Pyrococcus abyssi (strain GE5 / Orsay), this protein is Inorganic pyrophosphatase.